The primary structure comprises 233 residues: Ciliary microtubule inner protein 6 (233 aa).

Basic and acidic residues-rich tracts occupy residues 1-14 (MEGEEKQQQHKTED) and 21-33 (AERKVEIKNEKSP). The tract at residues 1 to 45 (MEGEEKQQQHKTEDDGIACVAERKVEIKNEKSPGKSTQHPKPCVD) is disordered. Positions 127 to 159 (GIVPLTSLDVSGEHENNFVEYISFIHQYDARRT) are mn. The segment at 192 to 233 (LLNTLESGSSEQPQKTDKGNSSGDKVTSPGLCQQNSQELLET) is disordered. Over residues 195-233 (TLESGSSEQPQKTDKGNSSGDKVTSPGLCQQNSQELLET) the composition is skewed to polar residues.

The protein resides in the cell projection. The protein localises to the cilium. The protein is Ciliary microtubule inner protein 6 (Cimip6) of Mus musculus (Mouse).